Reading from the N-terminus, the 457-residue chain is Acetylcholine receptor subunit alpha (457 aa).

The N-terminal stretch at 1-20 is a signal peptide; it reads MEPWPLLLLFSLCSAGLVLG. At 21–232 the chain is on the extracellular side; the sequence is SEHETRLVAK…YHFVMQRLPL (212 aa). Disulfide bonds link Cys148–Cys162 and Cys212–Cys213. A glycan (N-linked (GlcNAc...) asparagine) is linked at Asn161. Residues 233-253 form a helical membrane-spanning segment; that stretch reads YFIVNVIIPCLLFSFLTGLVF. The Cytoplasmic segment spans residues 254–264; sequence YLPTDSGEKMT. A helical membrane pass occupies residues 265 to 285; sequence LSISVLLSLTVFLLVIVELIP. Topologically, residues 286–296 are extracellular; it reads STSSAVPLIGK. The helical transmembrane segment at 297–317 threads the bilayer; the sequence is YMLFTMVFVIASIIITVIVIN. The Cytoplasmic segment spans residues 318 to 427; that stretch reads THHRSPSTHV…EWKYVAMVMD (110 aa). A helical membrane pass occupies residues 428–448; it reads HILLGVFMLVCIIGTLAVFAG. At 449-457 the chain is on the extracellular side; the sequence is RLIELNQQG.

It belongs to the ligand-gated ion channel (TC 1.A.9) family. Acetylcholine receptor (TC 1.A.9.1) subfamily. Alpha-1/CHRNA1 sub-subfamily. One of the alpha chains that assemble within the acetylcholine receptor, a pentamer of two alpha chains, a beta, a delta, and a gamma (in immature muscle) or epsilon (in mature muscle) chains. The muscle heteropentamer composed of alpha-1, beta-1, delta, epsilon subunits interacts with the alpha-conotoxin ImII. In terms of assembly, is able to interact with other subunits of the acetylcholine receptor but is not assembled into functional acetylcholine-gated cation-selective channels. In terms of tissue distribution, isoform 1 is only expressed in skeletal muscle. Isoform 2 is constitutively expressed in skeletal muscle, brain, heart, kidney, liver, lung and thymus.

It localises to the postsynaptic cell membrane. Its subcellular location is the cell membrane. It carries out the reaction K(+)(in) = K(+)(out). The enzyme catalyses Na(+)(in) = Na(+)(out). Upon acetylcholine binding, the AChR responds by an extensive change in conformation that affects all subunits and leads to opening of an ion-conducting channel across the plasma membrane. Functionally, non functional acetylcholine receptor alpha subunit which is not integrated into functional acetylcholine-gated cation-selective channels. The polypeptide is Acetylcholine receptor subunit alpha (Homo sapiens (Human)).